A 1203-amino-acid polypeptide reads, in one-letter code: Regulator of telomere elongation helicase 1 (1203 aa).

The Helicase ATP-binding domain maps to 7-296 (NGVTVDFPFQ…ARVTQQGELQ (290 aa)). ATP is bound at residue 42–49 (SPTGTGKT). 4 residues coordinate [4Fe-4S] cluster: Cys-145, Cys-163, Cys-172, and Cys-207. The Nuclear localization signal signature appears at 151–167 (KKQESNHMQISLCRKKV). The short motif at 250-253 (DEAH) is the DEAH box element. The short motif at 871-877 (QKGGRKK) is the Nuclear localization signal element. Disordered regions lie at residues 998 to 1020 (QLDPGQHLNHGQPHLSAHPTSKG) and 1120 to 1203 (TTGK…RSKQ). Residues 1123–1134 (KDLELEGPRDES) are compositionally biased toward basic and acidic residues. The PIP-box motif lies at 1160 to 1167 (QSKISSFF). Over residues 1169 to 1181 (QRPDESVRSDDTT) the composition is skewed to basic and acidic residues.

This sequence belongs to the helicase family. RAD3/XPD subfamily. In terms of assembly, interacts with TERF1. Interacts (via PIP-box) with PCNA; the interaction is direct and essential for suppressing telomere fragility. Interacts with MMS19; the interaction mediates the association of RTEL1 with the cytosolic iron-sulfur protein assembly (CIA) complex.

The protein localises to the nucleus. The catalysed reaction is ATP + H2O = ADP + phosphate + H(+). In terms of biological role, a probable ATP-dependent DNA helicase implicated in telomere-length regulation, DNA repair and the maintenance of genomic stability. Acts as an anti-recombinase to counteract toxic recombination and limit crossover during meiosis. Regulates meiotic recombination and crossover homeostasis by physically dissociating strand invasion events and thereby promotes noncrossover repair by meiotic synthesis dependent strand annealing (SDSA) as well as disassembly of D loop recombination intermediates. Also disassembles T loops and prevents telomere fragility by counteracting telomeric G4-DNA structures, which together ensure the dynamics and stability of the telomere. The polypeptide is Regulator of telomere elongation helicase 1 (Rtel1) (Mus spretus (Western Mediterranean mouse)).